The following is a 506-amino-acid chain: Histidine--tRNA ligase, mitochondrial (506 aa).

The N-terminal 33 residues, 1 to 33 (MPQLGLLPGRAWTVLLGLLRPPPGALCIRAVRS), are a transit peptide targeting the mitochondrion. Ser67 carries the phosphoserine modification. L-histidine-binding positions include 131 to 133 (DLT), Arg158, Gln174, Asp178, Arg327, and 331 to 332 (YY). At Lys444 the chain carries N6-acetyllysine.

Belongs to the class-II aminoacyl-tRNA synthetase family. As to quaternary structure, homodimer.

It localises to the mitochondrion. The enzyme catalyses tRNA(His) + L-histidine + ATP = L-histidyl-tRNA(His) + AMP + diphosphate + H(+). Its function is as follows. Mitochondrial aminoacyl-tRNA synthetase that catalyzes the ATP-dependent ligation of histidine to the 3'-end of its cognate tRNA, via the formation of an aminoacyl-adenylate intermediate (His-AMP). This is Histidine--tRNA ligase, mitochondrial (HARS2) from Bos taurus (Bovine).